The primary structure comprises 357 residues: Putative lipopolysaccharide heptosyltransferase 4 (357 aa).

The catalysed reaction is alpha-D-Glc-(1-&gt;2)-alpha-D-Glc-(1-&gt;3)-[alpha-D-Gal-(1-&gt;6)]-alpha-D-Glc-(1-&gt;3)-[L-alpha-D-Hep-(1-&gt;7)]-4-O-PO3(2-)-L-alpha-D-Hep-(1-&gt;3)-4-O-PO3(2-)-L-alpha-D-Hep-(1-&gt;5)-[alpha-Kdo-(2-&gt;4)]-alpha-Kdo-(2-&gt;6)-lipid A + ADP-L-glycero-beta-D-manno-heptose = lipid A-core + ADP + H(+). It participates in bacterial outer membrane biogenesis; LPS core biosynthesis. In terms of biological role, transferase involved in the biosynthesis of the core oligosaccharide region of lipopolysaccharide (LPS). May catalyze the addition of the terminal heptose (heptose IV) to the outer-core glucose III, the last step of the lipid A-core oligosaccharide biosynthesis. This Escherichia coli (strain K12) protein is Putative lipopolysaccharide heptosyltransferase 4.